Consider the following 457-residue polypeptide: Argininosuccinate lyase (457 aa).

This sequence belongs to the lyase 1 family. Argininosuccinate lyase subfamily.

The protein localises to the cytoplasm. The catalysed reaction is 2-(N(omega)-L-arginino)succinate = fumarate + L-arginine. The protein operates within amino-acid biosynthesis; L-arginine biosynthesis; L-arginine from L-ornithine and carbamoyl phosphate: step 3/3. The protein is Argininosuccinate lyase of Exiguobacterium sibiricum (strain DSM 17290 / CCUG 55495 / CIP 109462 / JCM 13490 / 255-15).